The following is a 320-amino-acid chain: Cytochrome f (320 aa).

The signal sequence occupies residues 1–35; the sequence is MQTRNTFSWIKEEITRSISVSLMIYIITGASISNA. The heme site is built by Y36, C56, C59, and H60. A helical transmembrane segment spans residues 286 to 306; sequence VQGLLFFLASIVFAQIFLVLK.

It belongs to the cytochrome f family. In terms of assembly, the 4 large subunits of the cytochrome b6-f complex are cytochrome b6, subunit IV (17 kDa polypeptide, petD), cytochrome f and the Rieske protein, while the 4 small subunits are PetG, PetL, PetM and PetN. The complex functions as a dimer. Requires heme as cofactor.

It localises to the plastid. The protein resides in the chloroplast thylakoid membrane. Functionally, component of the cytochrome b6-f complex, which mediates electron transfer between photosystem II (PSII) and photosystem I (PSI), cyclic electron flow around PSI, and state transitions. The sequence is that of Cytochrome f from Gossypium barbadense (Sea Island cotton).